The following is a 250-amino-acid chain: Glutathione transferase omega-1 (250 aa).

A GST N-terminal domain is found at 21–101; the sequence is SKGSFRVYNM…YLDDAFPETR (81 aa). The Nucleophile role is filled by cysteine 33. Residues lysine 60 and 85–86 contribute to the glutathione site; that span reads ES. Residues 106–234 enclose the GST C-terminal domain; the sequence is DPYEKVQQKL…TQSLEHGAAF (129 aa).

The protein belongs to the GST superfamily. Omega family. In terms of assembly, homodimer. As to expression, expressed in the intestinal cells.

It is found in the cytoplasm. It carries out the reaction RX + glutathione = an S-substituted glutathione + a halide anion + H(+). It catalyses the reaction L-dehydroascorbate + 2 glutathione = glutathione disulfide + L-ascorbate. The enzyme catalyses methylarsonate + 2 glutathione + H(+) = methylarsonous acid + glutathione disulfide + H2O. Functionally, exhibits glutathione-dependent thiol transferase activity. Has dehydroascorbate reductase activity and may contribute to the recycling of ascorbic acid. Participates in the biotransformation of inorganic arsenic and reduces monomethylarsonic acid (MMA). Protects against environmental stress and oxidative stress. This is Glutathione transferase omega-1 (gsto-1) from Caenorhabditis elegans.